The sequence spans 780 residues: ATP-dependent 6-phosphofructokinase, muscle type (780 aa).

Thr2 is modified (N-acetylthreonine). The N-terminal catalytic PFK domain 1 stretch occupies residues 2 to 390 (THEEHHAAKT…NWEVYKLLAH (389 aa)). ATP is bound by residues Gly25, 88–89 (RC), and 118–121 (GDGS). Residue Asp119 coordinates Mg(2+). The residue at position 133 (Ser133) is a Phosphoserine. Substrate-binding positions include 164–166 (SID), Arg201, 208–210 (MGR), Glu264, Arg292, and 298–301 (HVQR). Asp166 acts as the Proton acceptor in catalysis. A Phosphoserine modification is found at Ser377. The segment at 391–401 (VRPPVSKSGSH) is interdomain linker. Residues 402–780 (TVAVMNVGAP…TRKRSGEGAV (379 aa)) are C-terminal regulatory PFK domain 2. Beta-D-fructose 2,6-bisphosphate is bound by residues Arg471 and 528 to 532 (TVSNN). O-linked (GlcNAc) serine glycosylation occurs at Ser530. An N6-(2-hydroxyisobutyryl)lysine modification is found at Lys557. Beta-D-fructose 2,6-bisphosphate contacts are provided by residues Arg566, 573-575 (MGG), Glu629, Arg655, and 661-664 (HMQQ). At Ser667 the chain carries Phosphoserine. Beta-D-fructose 2,6-bisphosphate is bound at residue Arg735. The residue at position 775 (Ser775) is a Phosphoserine.

It belongs to the phosphofructokinase type A (PFKA) family. ATP-dependent PFK group I subfamily. Eukaryotic two domain clade 'E' sub-subfamily. As to quaternary structure, homo- and heterotetramers. Phosphofructokinase (PFK) enzyme functions as a tetramer composed of different combinations of 3 types of subunits, called PFKM (M), PFKL (L) and PFKP (P). The composition of the PFK tetramer differs according to the tissue type it is present in. The kinetic and regulatory properties of the tetrameric enzyme are dependent on the subunit composition, hence can vary across tissues. Interacts (via C-terminus) with HK1 (via N-terminal spermatogenic cell-specific region). Mg(2+) serves as cofactor. In terms of processing, glcNAcylation decreases enzyme activity.

It localises to the cytoplasm. It carries out the reaction beta-D-fructose 6-phosphate + ATP = beta-D-fructose 1,6-bisphosphate + ADP + H(+). The protein operates within carbohydrate degradation; glycolysis; D-glyceraldehyde 3-phosphate and glycerone phosphate from D-glucose: step 3/4. Its activity is regulated as follows. Allosterically activated by ADP, AMP, or fructose 2,6-bisphosphate, and allosterically inhibited by ATP or citrate. In terms of biological role, catalyzes the phosphorylation of D-fructose 6-phosphate to fructose 1,6-bisphosphate by ATP, the first committing step of glycolysis. The sequence is that of ATP-dependent 6-phosphofructokinase, muscle type (PFKM) from Macaca fascicularis (Crab-eating macaque).